The primary structure comprises 242 residues: uncharacterized protein (242 aa).

This is an uncharacterized protein from Aquifex aeolicus (strain VF5).